The following is a 1241-amino-acid chain: ATP-dependent helicase/nuclease subunit A (1241 aa).

Residues 12–485 form the UvrD-like helicase ATP-binding domain; it reads SQWTDDQWKA…IDLAKNFRSR (474 aa). Residue 33 to 40 coordinates ATP; sequence AAAGSGKT. Residues 505 to 805 form the UvrD-like helicase C-terminal domain; sequence GEIDYDADAE…RIMTIHKSKG (301 aa).

The protein belongs to the helicase family. AddA subfamily. As to quaternary structure, heterodimer of AddA and AddB/RexB. Requires Mg(2+) as cofactor.

It carries out the reaction Couples ATP hydrolysis with the unwinding of duplex DNA by translocating in the 3'-5' direction.. It catalyses the reaction ATP + H2O = ADP + phosphate + H(+). In terms of biological role, the heterodimer acts as both an ATP-dependent DNA helicase and an ATP-dependent, dual-direction single-stranded exonuclease. Recognizes the chi site generating a DNA molecule suitable for the initiation of homologous recombination. The AddA nuclease domain is required for chi fragment generation; this subunit has the helicase and 3' -&gt; 5' nuclease activities. This is ATP-dependent helicase/nuclease subunit A from Bacillus cereus (strain ATCC 14579 / DSM 31 / CCUG 7414 / JCM 2152 / NBRC 15305 / NCIMB 9373 / NCTC 2599 / NRRL B-3711).